A 222-amino-acid chain; its full sequence is MCLRLGGLSVGDFRKVLMKTGLVLVVLGHVSFIAAALLHGTVLRYVAAPNDAVALQYCVVDILSVTSAIVVITSGISVIVLSRYLPSIPLRWTVFSSSVACALLSLTCALGLLASIAMTFATQGRALLAACTFGGPERLALAPDCPFDPTRIYSSSLCLWGISLLFCVAESVFAVRSAQLAYQVLELRPWLGKSSHRMMQESPEPVEDPDLPSRTSSGPMTL.

Transmembrane regions (helical) follow at residues 22 to 42 (LVLV…HGTV), 62 to 82 (ILSV…IVLS), 100 to 120 (ACAL…AMTF), and 155 to 175 (SSLC…VFAV). The disordered stretch occupies residues 198–222 (MMQESPEPVEDPDLPSRTSSGPMTL). The segment covering 213-222 (SRTSSGPMTL) has biased composition (polar residues).

Belongs to the TMEM54 family.

It localises to the membrane. The protein is Transmembrane protein 54 (TMEM54) of Bos taurus (Bovine).